The chain runs to 247 residues: tRNA pseudouridine synthase A (247 aa).

Aspartate 52 (nucleophile) is an active-site residue. Tyrosine 113 is a binding site for substrate.

The protein belongs to the tRNA pseudouridine synthase TruA family. In terms of assembly, homodimer.

The enzyme catalyses uridine(38/39/40) in tRNA = pseudouridine(38/39/40) in tRNA. In terms of biological role, formation of pseudouridine at positions 38, 39 and 40 in the anticodon stem and loop of transfer RNAs. The polypeptide is tRNA pseudouridine synthase A (Bartonella bacilliformis (strain ATCC 35685 / KC583 / Herrer 020/F12,63)).